The following is a 187-amino-acid chain: MYLYKKNYYGYAESLLDISISENNVEKYINDCFFILSIIQNNQVLILLFKSHFIGKQEKFNIIDKIFSAKIEKILVNFLKVIAKNNLFLYYKQILLKYIKLANSHLSQTWGEIQTAFPISSVMTSSFESILSKKLGKKVHLRHKINSKLISGIRIIVDNQIFENSLFSELKLLKQNLKKHLITKNDL.

Belongs to the ATPase delta chain family. F-type ATPases have 2 components, F(1) - the catalytic core - and F(0) - the membrane proton channel. F(1) has five subunits: alpha(3), beta(3), gamma(1), delta(1), epsilon(1). F(0) has three main subunits: a(1), b(2) and c(10-14). The alpha and beta chains form an alternating ring which encloses part of the gamma chain. F(1) is attached to F(0) by a central stalk formed by the gamma and epsilon chains, while a peripheral stalk is formed by the delta and b chains.

It localises to the cell membrane. F(1)F(0) ATP synthase produces ATP from ADP in the presence of a proton or sodium gradient. F-type ATPases consist of two structural domains, F(1) containing the extramembraneous catalytic core and F(0) containing the membrane proton channel, linked together by a central stalk and a peripheral stalk. During catalysis, ATP synthesis in the catalytic domain of F(1) is coupled via a rotary mechanism of the central stalk subunits to proton translocation. Functionally, this protein is part of the stalk that links CF(0) to CF(1). It either transmits conformational changes from CF(0) to CF(1) or is implicated in proton conduction. This Mesomycoplasma hyopneumoniae (strain 232) (Mycoplasma hyopneumoniae) protein is ATP synthase subunit delta.